Reading from the N-terminus, the 306-residue chain is MEVTFFGTSAGLPTKERNTQAIALNLEPFSNSIWLFDVGEGTQHQILHHSIKLGKVDHIFITHMHGDHIFGLPGLLTSRSFQGGEDKPLTVIGPRGLQQFIETTLRLSESHLNYPITYIEIDNHFTYHHKGFSISAHLLNHGIPSYGYRIESPTTPGTIDVEALKSIGLYPGPKYQEVKSYDNFEHEGQVYNSDDFKGPAKPGPIISIFGDTKPCQSELSIAKDSDVMIHEATYIEGEKTLANNYHHSHIEDVFELIKQANVKRCLITHLSNRYNHENIQLIKQQLKTHEDVPNFEFVKDFDTFII.

The Zn(2+) site is built by histidine 63, histidine 65, aspartate 67, histidine 68, histidine 141, aspartate 211, and histidine 269. Aspartate 67 functions as the Proton acceptor in the catalytic mechanism.

The protein belongs to the RNase Z family. In terms of assembly, homodimer. Requires Zn(2+) as cofactor.

The enzyme catalyses Endonucleolytic cleavage of RNA, removing extra 3' nucleotides from tRNA precursor, generating 3' termini of tRNAs. A 3'-hydroxy group is left at the tRNA terminus and a 5'-phosphoryl group is left at the trailer molecule.. Functionally, zinc phosphodiesterase, which displays some tRNA 3'-processing endonuclease activity. Probably involved in tRNA maturation, by removing a 3'-trailer from precursor tRNA. The polypeptide is Ribonuclease Z (Staphylococcus haemolyticus (strain JCSC1435)).